Here is a 185-residue protein sequence, read N- to C-terminus: Disulfide bond formation protein B (185 aa).

Residues 1–25 (MLLFFVILGIFVLTILKAISKQRWS) are Cytoplasmic-facing. Residues 26–42 (WLLLAASALSLELSALY) traverse the membrane as a helical segment. Over 43–60 (FQHVMQLEPCVMCVYERL) the chain is Periplasmic. Cys-52 and Cys-55 are joined by a disulfide. A helical transmembrane segment spans residues 61–76 (AMLGILLAGLIGASSP). At 77-83 (NNVFIRL) the chain is on the cytoplasmic side. The chain crosses the membrane as a helical span at residues 84–101 (SAFLLWGISAVWGILLAI). Over 102 to 156 (KHTDYQLHPSPFFTCDFFPNFPAWAPLHEWLPWLFNPTGDCSDIVWQFLGYSMPQ) the chain is Periplasmic. Cys-116 and Cys-142 form a disulfide bridge. The chain crosses the membrane as a helical span at residues 157–175 (WLIVSFSLYTLLFIIFAIS). Residues 176 to 185 (AVLKTKKQLF) lie on the Cytoplasmic side of the membrane.

The protein belongs to the DsbB family.

The protein localises to the cell inner membrane. Its function is as follows. Required for disulfide bond formation in some periplasmic proteins. Acts by oxidizing the DsbA protein. This Psychromonas ingrahamii (strain DSM 17664 / CCUG 51855 / 37) protein is Disulfide bond formation protein B.